The sequence spans 66 residues: UPF0434 protein Jann_0424 (66 aa).

Belongs to the UPF0434 family.

This chain is UPF0434 protein Jann_0424, found in Jannaschia sp. (strain CCS1).